The following is a 527-amino-acid chain: Neutrophil cytosol factor 2 (527 aa).

TPR repeat units follow at residues 37–70 (SRIC…DKHL), 71–104 (AVSY…LRGN), and 121–154 (CEVL…KSEP). The residue at position 233 (Thr-233) is a Phosphothreonine. Positions 240-299 (LEGEAHRVLFGFVPETPEELQVMPGNIVFVLKKGNDNWATVMFNGQKGLVPCNYLEPVEL) constitute an SH3 1 domain. The tract at residues 304-345 (QQQPQEETSLESDIPAPPSSSAPGRPQLSPGQKGKEEPKQEI) is disordered. Residue Ser-324 is modified to Phosphoserine. Residues 336-345 (KGKEEPKQEI) are compositionally biased toward basic and acidic residues. Residues 352 to 430 (SYTLKVHYKY…YCLTLWCENT (79 aa)) enclose the PB1 domain. The residue at position 400 (Ser-400) is a Phosphoserine. The segment at 434-457 (QGFPDEPEESKKSDANNQTTEPEL) is disordered. The SH3 2 domain occupies 458 to 517 (KEGSKVVALFSYEATQPEDLEFLEGDVILVISTVNEQWLEGECKGKVGIFPKAFVEQHPT).

It belongs to the NCF2/NOXA1 family. Component of the phagocyte NADPH oxidase complex composed of an obligatory core heterodimer formed by the membrane proteins CYBA and CYBB and the cytosolic regulatory subunits NCF1/p47-phox, NCF2/p67-phox, NCF4/p40-phox and the small GTPase RAC1 or RAC2. Part of a cytosolic complex composed at least by NCF1, NCF2 and NCF4. Interacts with NCF4. Interacts (via the C-terminal SH3 domain) with NCF1 (via C-terminus). Interacts with SYTL1 and RAC1. May interact with NOXO1. Interacts with S100A8 and calprotectin (S100A8/9). Interacts with GBP7 (via GB1/RHD3-type G domain). Interacts with CYBB; the interaction is enhanced in the presence of GBP7.

Its subcellular location is the cytoplasm. In terms of biological role, subunit of the phagocyte NADPH oxidase complex that mediates the transfer of electrons from cytosolic NADPH to O2 to produce the superoxide anion (O2(-)). In the activated complex, electrons are first transferred from NADPH to flavin adenine dinucleotide (FAD) and subsequently transferred via two heme molecules to molecular oxygen, producing superoxide through an outer-sphere reaction. Activation of the NADPH oxidase complex is initiated by the assembly of cytosolic subunits of the NADPH oxidase complex with the core NADPH oxidase complex to form a complex at the plasma membrane or phagosomal membrane. This activation process is initiated by phosphorylation dependent binding of the cytosolic NCF1/p47-phox subunit to the C-terminus of CYBA/p22-phox. The chain is Neutrophil cytosol factor 2 from Bos taurus (Bovine).